A 62-amino-acid chain; its full sequence is uncharacterized protein (62 aa).

It is found in the plastid. It localises to the chloroplast. This is an uncharacterized protein from Porphyra purpurea (Red seaweed).